Here is an 863-residue protein sequence, read N- to C-terminus: Disintegrin and metalloproteinase domain-containing protein 15 (863 aa).

The N-terminal stretch at 1–17 (MRLALLWALGLLGAGSP) is a signal peptide. The propeptide occupies 18-206 (LPSWPLPNIG…LGQRHIRRRR (189 aa)). Positions 22–45 (PLPNIGGTEEQQAESEKAPREPLE) are disordered. The segment covering 35–44 (ESEKAPREPL) has biased composition (basic and acidic residues). The Cysteine switch motif lies at 177–184 (HTCALSWR). Cysteine 179 serves as a coordination point for Zn(2+). The Extracellular portion of the chain corresponds to 207–696 (DVVTETKTVE…QLKATSSLTT (490 aa)). The Peptidase M12B domain occupies 213–414 (KTVELVIVAD…GMGSCLFERL (202 aa)). Asparagine 237 carries N-linked (GlcNAc...) asparagine glycosylation. 4 disulfide bridges follow: cysteine 323–cysteine 409, cysteine 365–cysteine 393, cysteine 367–cysteine 376, and cysteine 480–cysteine 500. Histidine 348 is a Zn(2+) binding site. Glutamate 349 is a catalytic residue. Zn(2+)-binding residues include histidine 352 and histidine 358. N-linked (GlcNAc...) asparagine glycans are attached at residues asparagine 389 and asparagine 392. The Disintegrin domain maps to 421 to 508 (AAFCGNMFVE…QCPPDVSLGD (88 aa)). Positions 484–486 (RGD) match the Cell attachment site motif. N-linked (GlcNAc...) asparagine glycans are attached at residues asparagine 606 and asparagine 611. 3 disulfide bridges follow: cysteine 657–cysteine 667, cysteine 661–cysteine 673, and cysteine 675–cysteine 684. The EGF-like domain occupies 657-685 (CRSKCHGHGVCDSNRHCYCEEGWAPPDCT). A helical membrane pass occupies residues 697–717 (GLLLSLLVLLVLVMLGASYWY). A phosphotyrosine; by HCK and LCK mark is found at tyrosine 715 and tyrosine 735. Residues 718 to 863 (RARLHQRLCQ…PPPTVSSLYL (146 aa)) lie on the Cytoplasmic side of the membrane. The tract at residues 736–863 (RAAQSGPSER…PPPTVSSLYL (128 aa)) is disordered. Residues 767-778 (PAPPSRPLPPDP) show a composition bias toward pro residues. The segment covering 779-789 (VSKRLQAELAD) has biased composition (basic and acidic residues). Composition is skewed to pro residues over residues 791–800 (PNPPTRPLPA) and 813–824 (AKPPPPRKPLPA). 2 consecutive short sequence motifs (SH3-binding) follow at residues 815 to 821 (PPPPRKP) and 850 to 856 (RPAPPPP).

As to quaternary structure, interacts with ITAGV-ITGB3 (vitronectin receptor). Interacts with SH3GL2 and SNX9; this interaction occurs preferentially with ADAM15 precursor, rather than the processed form, suggesting it occurs in a secretory pathway compartment prior to the medial Golgi. Interacts with ITAG9-ITGB1. Interacts specifically with Src family protein-tyrosine kinases (PTKs). Interacts with SH3PXD2A. Interacts with ITAGV-ITGB1. Interacts with GRB2, HCK, ITSN1, ITSN2, LYN, MAPK1, MAPK3, NCF1, NCK1, nephrocystin, PTK6, SNX33, LCK and SRC. It depends on Zn(2+) as a cofactor. In terms of processing, the precursor is cleaved by a furin endopeptidase. Post-translationally, phosphorylation increases association with PTKs. In terms of tissue distribution, expressed in colon and small intestine. Expressed in airway smooth muscle and glomerular mesangial cells (at protein level). Ubiquitously expressed. Overexpressed in atherosclerotic lesions. Constitutively expressed in cultured endothelium and smooth muscle. Expressed in chondrocytes. Expressed in airway smooth muscle and glomerular mesangial cells.

It localises to the endomembrane system. Its subcellular location is the cell junction. It is found in the adherens junction. The protein resides in the cell projection. The protein localises to the cilium. It localises to the flagellum. Its subcellular location is the cytoplasmic vesicle. It is found in the secretory vesicle. The protein resides in the acrosome. Inhibited by hydroxamate-type metalloproteinase inhibitors such as marimastat. Inhibited by metalloproteinase inhibitor 2 (TIMP-2) and TIMP-3 at nanomolar concentrations. Not significantly inhibited by TIMP-1 at concentrations of up to 100 nM. Not activated by PMA or ionomycin. Functionally, active metalloproteinase with gelatinolytic and collagenolytic activity. Plays a role in the wound healing process. Mediates both heterotypic intraepithelial cell/T-cell interactions and homotypic T-cell aggregation. Inhibits beta-1 integrin-mediated cell adhesion and migration of airway smooth muscle cells. Suppresses cell motility on or towards fibronectin possibly by driving alpha-v/beta-1 integrin (ITAGV-ITGB1) cell surface expression via ERK1/2 inactivation. Cleaves E-cadherin in response to growth factor deprivation. Plays a role in glomerular cell migration. Plays a role in pathological neovascularization. May play a role in cartilage remodeling. May be proteolytically processed, during sperm epididymal maturation and the acrosome reaction. May play a role in sperm-egg binding through its disintegrin domain. In Homo sapiens (Human), this protein is Disintegrin and metalloproteinase domain-containing protein 15 (ADAM15).